The following is a 574-amino-acid chain: MTKLRGIAASDGIATAKAYMLVQPDLSFSKSTISDSEKEINRLHKALQDSTSDLETIRKIAAESLGEEEAQVFDAHMMILADPEFTGAIEGKINDDKVNAEQALKEVADLFVATFESMTNNAYMQERAADIKDVTKRVLSHLLGVTLPNPALIDEEVIVIAHDLTPSDTAQLNGKFVKAFVTDVGGRTSHSAIMARSLEIPAIVGTETVTQDVKAGDLLIVDGINGDVVLDPTDADIAEYDVKAQAFADQKAEWEKLKNEKSVTKDGKTFTVAANIGTPKDLAGVLENGSEAIGLYRTEFLYMDSAELPSEDDQFEAYKSVLEGMDGKPVVVRTMDIGGDKKLPYLPLPEEMNPFLGYRAIRISLDRDDIFRTQLRALLRASNYGKLRIMFPMIATVAEFRQAKGILEDEKAKLIAAGQTVSDDLQVGMMVEIPASAVLANQFAKEVDFFSIGTNDLIQYTMAADRMNERVSYLYQPYNPAILRLIKNVIDASHKEGKWTGMCGEAAGDSIMAPLLVGMGLDEFSMSATSVLRVRSLMKRLDTTELTDLVETAVNVNTSNEENQKLVEDFMKDR.

Residue His-190 is the Tele-phosphohistidine intermediate of the active site. Residues Arg-297 and Arg-333 each contribute to the phosphoenolpyruvate site. Residues Glu-432 and Asp-456 each contribute to the Mg(2+) site. Phosphoenolpyruvate is bound by residues 455–456 (ND) and Arg-466. Cys-503 serves as the catalytic Proton donor.

The protein belongs to the PEP-utilizing enzyme family. In terms of assembly, homodimer. It depends on Mg(2+) as a cofactor.

The protein localises to the cytoplasm. It carries out the reaction L-histidyl-[protein] + phosphoenolpyruvate = N(pros)-phospho-L-histidyl-[protein] + pyruvate. Functionally, general (non sugar-specific) component of the phosphoenolpyruvate-dependent sugar phosphotransferase system (sugar PTS). This major carbohydrate active-transport system catalyzes the phosphorylation of incoming sugar substrates concomitantly with their translocation across the cell membrane. Enzyme I transfers the phosphoryl group from phosphoenolpyruvate (PEP) to the phosphoryl carrier protein (HPr). The chain is Phosphoenolpyruvate-protein phosphotransferase (ptsI) from Latilactobacillus sakei (Lactobacillus sakei).